A 511-amino-acid polypeptide reads, in one-letter code: ESX-1 secretion system protein EccD1 (511 aa).

The residue at position 2 (serine 2) is an N-acetylserine. At 2-143 (SAPAVAAGPT…PEFDRTALNR (142 aa)) the chain is on the cytoplasmic side. A helical membrane pass occupies residues 144–164 (FVGAAIPLLTAPVIGMAMRAW). Topologically, residues 165–170 (WETGRS) are periplasmic. The helical transmembrane segment at 171 to 191 (LWWPLAIGILGIAVLVGSFVA) threads the bilayer. Topologically, residues 192–202 (NRFYQSGHLAE) are cytoplasmic. A helical membrane pass occupies residues 203 to 223 (CLLVTTYLLIATAAALAVPLP). The Periplasmic portion of the chain corresponds to 224–227 (RGVN). The helical transmembrane segment at 228–248 (SLGAPQVAGAATAVLFLTLMT) threads the bilayer. Residues 249–257 (RGGPRKRHE) are Cytoplasmic-facing. A helical transmembrane segment spans residues 258-278 (LASFAVITAIAVIAAAAAFGY). Over 279-285 (GYQDWVP) the chain is Periplasmic. Residues 286 to 306 (AGGIAFGLFIVTNAAKLTVAV) form a helical membrane-spanning segment. Topologically, residues 307–367 (ARIALPPIPV…TERSKLAKQL (61 aa)) are cytoplasmic. The next 2 membrane-spanning stretches (helical) occupy residues 368 to 388 (LIGY…AVVV) and 389 to 409 (RGHF…VCGF). The Cytoplasmic segment spans residues 410–420 (RSRLYAERWCA). A helical membrane pass occupies residues 421-441 (WALLAATVAIPTGLTAKLIIW). Topologically, residues 442–444 (YPH) are periplasmic. Residues 445–465 (YAWLLLSVYLTVALVALVVVG) traverse the membrane as a helical segment. Topologically, residues 466-482 (SMAHVRRVSPVVKRTLE) are cytoplasmic. The helical transmembrane segment at 483–503 (LIDGAMIAAIIPMLLWITGVY) threads the bilayer. Topologically, residues 504–511 (DTVRNIRF) are periplasmic.

This sequence belongs to the EccD/Snm4 family. In terms of assembly, possibly a homodimer. Part of the ESX-1 / type VII secretion system (T7SS), which is composed of cytosolic and membrane components. The ESX-1 membrane complex is composed of EccB1, EccCa1, EccCb1, EccD1 and EccE1.

The protein resides in the cell inner membrane. Part of the ESX-1 specialized secretion system, which delivers several virulence factors to host cells during infection, including the key virulence factors EsxA (ESAT-6) and EsxB (CFP-10). This chain is ESX-1 secretion system protein EccD1, found in Mycobacterium tuberculosis (strain ATCC 25618 / H37Rv).